Here is a 438-residue protein sequence, read N- to C-terminus: uncharacterized protein (438 aa).

Lys273 is subject to N6-(pyridoxal phosphate)lysine.

It belongs to the class-III pyridoxal-phosphate-dependent aminotransferase family. Pyridoxal 5'-phosphate serves as cofactor.

Its subcellular location is the mitochondrion. This is an uncharacterized protein from Schizosaccharomyces pombe (strain 972 / ATCC 24843) (Fission yeast).